The chain runs to 484 residues: MSNTTVVPSTAGPGPSGGPGGGGGGGGGGGGTEVIQVTNVSPSASSEQMRTLFGFLGKIDELRLFPPDDSPLPVSSRVCFVKFHDPDSAVVAQHLTNTVFVDRALIVVPYAEGVIPDEAKALSLLAPANAVAGLLPGGGLLPTPNPLTQIGAVPLAALGAPTLDPALAALGLPGANLNSQSLAADQLLKLMSTVDPKLNHVAAGLVSPSLKSDTSSKEIEEAMKRVREAQSLISAAIEPDKKEEKRRHSRSRSRSRRRRTPSSSRHRRSRSRSRRRSHSKSRSRRRSKSPRRRRSHSRERGRRSRSTSKTRDKKKEDKEKKRSKTPPKSYSTARRSRSASRERRRRRSRSGTRSPKKPRSPKRKLSRSPSPRRHKKEKKKDKDKERSRDERERSTSKKKKSKDKEKDRERKSESDKDVKQVTRDYDEEEQGYDSEKEKKEEKKPIETGSPKTKECSVEKGTGDSLRESKVNGDDHHEEDMDMSD.

Residues 1–33 (MSNTTVVPSTAGPGPSGGPGGGGGGGGGGGGTE) form a disordered region. Ser-2 bears the N-acetylserine mark. Residues 14 to 32 (GPSGGPGGGGGGGGGGGGT) show a composition bias toward gly residues. The 81-residue stretch at 33-113 (EVIQVTNVSP…ALIVVPYAEG (81 aa)) folds into the RRM domain. Residue Lys-197 forms a Glycyl lysine isopeptide (Lys-Gly) (interchain with G-Cter in SUMO2) linkage. Ser-207 carries the post-translational modification Phosphoserine. Residue Lys-211 forms a Glycyl lysine isopeptide (Lys-Gly) (interchain with G-Cter in SUMO2) linkage. Ser-212 bears the Phosphoserine mark. The disordered stretch occupies residues 233 to 484 (ISAAIEPDKK…HHEEDMDMSD (252 aa)). Residues 244 to 308 (EKRRHSRSRS…ERGRRSRSTS (65 aa)) show a composition bias toward basic residues. A run of 10 repeats spans residues 247–255 (RHSRSRSRS), 258–265 (RRTPSSSR), 267–274 (RRSRSRSR), 275–282 (RRSHSKSR), 285–292 (RRSKSPRR), 293–300 (RRSHSRER), 302–309 (RRSRSTSK), 321–328 (KRSKTPPK), 334–341 (RRSRSASR), and 346–353 (RRSRSGTR). The 10 X 8 AA approximate repeats of R-R-S-R-S-R-S-R stretch occupies residues 247 to 353 (RHSRSRSRSR…RRRRSRSGTR (107 aa)). Positions 309-320 (KTRDKKKEDKEK) are enriched in basic and acidic residues. Ser-323 bears the Phosphoserine mark. At Thr-325 the chain carries Phosphothreonine. Residues 334-379 (RRSRSASRERRRRRSRSGTRSPKKPRSPKRKLSRSPSPRRHKKEKK) are compositionally biased toward basic residues. Basic and acidic residues-rich tracts occupy residues 380–395 (KDKD…ERST), 402–424 (KDKE…VTRD), and 433–478 (DSEK…HHEE). A phosphoserine mark is found at Ser-414 and Ser-434. Thr-447 bears the Phosphothreonine mark. 4 positions are modified to phosphoserine: Ser-449, Ser-456, Ser-464, and Ser-483.

The protein belongs to the splicing factor SR family. In terms of assembly, interacts with PUF60.

The protein localises to the nucleus. Functionally, may function in pre-mRNA splicing. The protein is Serine/arginine-rich splicing factor 11 (SRSF11) of Homo sapiens (Human).